A 62-amino-acid chain; its full sequence is Large ribosomal subunit protein bL33 (62 aa).

The protein belongs to the bacterial ribosomal protein bL33 family.

This is Large ribosomal subunit protein bL33 from Acaryochloris marina (strain MBIC 11017).